Reading from the N-terminus, the 591-residue chain is DEAD-box ATP-dependent RNA helicase 30 (591 aa).

The tract at residues 1-109 is disordered; sequence MSSYDRRFAD…GRGGSSKREL (109 aa). Residues 72-103 are compositionally biased toward gly residues; the sequence is FSVGRGGGRGGYGQYGDRNGGGNWGGGGGRGG. Residues 165–193 carry the Q motif motif; that stretch reads KMFQDANFPDNILEAIAKLGFTEPTPIQA. The region spanning 196–371 is the Helicase ATP-binding domain; that stretch reads WPMALKGRDL…RQFLRDPYKA (176 aa). An ATP-binding site is contributed by 209 to 216; the sequence is AETGSGKT. The DEAD box signature appears at 319 to 322; sequence DEAD. The Helicase C-terminal domain maps to 399–544; the sequence is RLLTLLKQLM…VVPPTLSALV (146 aa). The disordered stretch occupies residues 547–591; it reads SGSGYGGSGGGRNFRPRGGGRGGGFGDKRSRSTSNFVPHGGKRTW. Over residues 549-571 the composition is skewed to gly residues; the sequence is SGYGGSGGGRNFRPRGGGRGGGF.

The protein belongs to the DEAD box helicase family. DDX5/DBP2 subfamily.

It localises to the nucleus. It carries out the reaction ATP + H2O = ADP + phosphate + H(+). In terms of biological role, ATP-dependent RNA helicase involved nonsense-mediated mRNA decay and ribosome biogenesis through rRNA processing. The protein is DEAD-box ATP-dependent RNA helicase 30 (RH30) of Arabidopsis thaliana (Mouse-ear cress).